The sequence spans 228 residues: MPAENIVEVHHLKKSVGQGEHELSILTGVELVVKRGETIALVGESGSGKSTLLAILAGLDDGSSGEVSLVGQPLHNMDEEARAKLRAKHVGFVFQSFMLIPTLNALENVELPALLRGESSAESRNGAKALLEQLGLGKRLDHLPAQLSGGEQQRVALARAFNGRPDVLFADEPTGNLDRQTGDKIADLLFSLNREHGTTLIMVTHDLQLAARCDRCLRLVNGQLQEEA.

The 222-residue stretch at 7–228 folds into the ABC transporter domain; that stretch reads VEVHHLKKSV…LVNGQLQEEA (222 aa). Position 43–50 (43–50) interacts with ATP; the sequence is GESGSGKS.

Belongs to the ABC transporter superfamily.

This is an uncharacterized protein from Escherichia coli O157:H7.